The primary structure comprises 397 residues: Riboflavin biosynthesis protein RibBA (397 aa).

The interval 1-199 (MFHRIEEALE…IEDLIAYRRH (199 aa)) is DHBP synthase. D-ribulose 5-phosphate-binding positions include 26–27 (RE), Asp31, 138–142 (RAGHT), and Glu162. Glu27 is a binding site for Mg(2+). His141 is a binding site for Mg(2+). The segment at 200-397 (HETLVTREVE…ASKLGHLLNL (198 aa)) is GTP cyclohydrolase II. 250 to 254 (RVHSE) serves as a coordination point for GTP. 3 residues coordinate Zn(2+): Cys255, Cys266, and Cys268. GTP contacts are provided by residues Gln271, 293-295 (EGR), and Thr315. Asp327 (proton acceptor; for GTP cyclohydrolase activity) is an active-site residue. The Nucleophile; for GTP cyclohydrolase activity role is filled by Arg329. GTP is bound by residues Thr350 and Lys355.

It in the N-terminal section; belongs to the DHBP synthase family. This sequence in the C-terminal section; belongs to the GTP cyclohydrolase II family. Mg(2+) is required as a cofactor. Mn(2+) serves as cofactor. Requires Zn(2+) as cofactor.

The enzyme catalyses D-ribulose 5-phosphate = (2S)-2-hydroxy-3-oxobutyl phosphate + formate + H(+). The catalysed reaction is GTP + 4 H2O = 2,5-diamino-6-hydroxy-4-(5-phosphoribosylamino)-pyrimidine + formate + 2 phosphate + 3 H(+). It participates in cofactor biosynthesis; riboflavin biosynthesis; 2-hydroxy-3-oxobutyl phosphate from D-ribulose 5-phosphate: step 1/1. It functions in the pathway cofactor biosynthesis; riboflavin biosynthesis; 5-amino-6-(D-ribitylamino)uracil from GTP: step 1/4. Functionally, catalyzes the conversion of D-ribulose 5-phosphate to formate and 3,4-dihydroxy-2-butanone 4-phosphate. Catalyzes the conversion of GTP to 2,5-diamino-6-ribosylamino-4(3H)-pyrimidinone 5'-phosphate (DARP), formate and pyrophosphate. This chain is Riboflavin biosynthesis protein RibBA, found in Bacillus mycoides (strain KBAB4) (Bacillus weihenstephanensis).